A 213-amino-acid chain; its full sequence is Uridine kinase (213 aa).

15–22 (GASASGKS) is an ATP binding site.

This sequence belongs to the uridine kinase family.

The protein localises to the cytoplasm. The catalysed reaction is uridine + ATP = UMP + ADP + H(+). It carries out the reaction cytidine + ATP = CMP + ADP + H(+). The protein operates within pyrimidine metabolism; CTP biosynthesis via salvage pathway; CTP from cytidine: step 1/3. Its pathway is pyrimidine metabolism; UMP biosynthesis via salvage pathway; UMP from uridine: step 1/1. In Salmonella agona (strain SL483), this protein is Uridine kinase.